The chain runs to 261 residues: Cytochrome c oxidase subunit 3 (261 aa).

Residues 1-15 lie on the Mitochondrial matrix side of the membrane; sequence MTHQTHAYHMVNPSP. Residues 16 to 34 traverse the membrane as a helical segment; the sequence is WPLTGALSALLMTSGLTMW. Topologically, residues 35–40 are mitochondrial intermembrane; the sequence is FHFNST. A helical transmembrane segment spans residues 41–66; it reads ILLMLGLTTNMLTMYQWWRDIIREST. At 67–72 the chain is on the mitochondrial matrix side; that stretch reads FQGHHT. Residues 73 to 105 form a helical membrane-spanning segment; it reads PVVQKGLRYGMILFIISEVLFFTGFFWAFYHSS. Residues 106–128 are Mitochondrial intermembrane-facing; the sequence is LAPTPELGGCWPPTGIHPLNPLE. A helical transmembrane segment spans residues 129-152; sequence VPLLNTSVLLASGVSITWAHHSLM. Residues 153–155 lie on the Mitochondrial matrix side of the membrane; sequence EGH. The chain crosses the membrane as a helical span at residues 156–183; sequence RNHMLQALFITIALGVYFTLLQASEYYE. Over 184–190 the chain is Mitochondrial intermembrane; it reads APFTISD. Residues 191-223 form a helical membrane-spanning segment; it reads GVYGSTFFVATGFHGLHVIIGSTFLIVCFFRQL. Over 224–232 the chain is Mitochondrial matrix; it reads KFHFTSSHH. Residues 233–256 form a helical membrane-spanning segment; it reads FGFEAAAWYWHFVDVVWLFLYVSI. At 257–261 the chain is on the mitochondrial intermembrane side; the sequence is YWWGS.

The protein belongs to the cytochrome c oxidase subunit 3 family. As to quaternary structure, component of the cytochrome c oxidase (complex IV, CIV), a multisubunit enzyme composed of 14 subunits. The complex is composed of a catalytic core of 3 subunits MT-CO1, MT-CO2 and MT-CO3, encoded in the mitochondrial DNA, and 11 supernumerary subunits COX4I, COX5A, COX5B, COX6A, COX6B, COX6C, COX7A, COX7B, COX7C, COX8 and NDUFA4, which are encoded in the nuclear genome. The complex exists as a monomer or a dimer and forms supercomplexes (SCs) in the inner mitochondrial membrane with NADH-ubiquinone oxidoreductase (complex I, CI) and ubiquinol-cytochrome c oxidoreductase (cytochrome b-c1 complex, complex III, CIII), resulting in different assemblies (supercomplex SCI(1)III(2)IV(1) and megacomplex MCI(2)III(2)IV(2)).

It localises to the mitochondrion inner membrane. It catalyses the reaction 4 Fe(II)-[cytochrome c] + O2 + 8 H(+)(in) = 4 Fe(III)-[cytochrome c] + 2 H2O + 4 H(+)(out). Component of the cytochrome c oxidase, the last enzyme in the mitochondrial electron transport chain which drives oxidative phosphorylation. The respiratory chain contains 3 multisubunit complexes succinate dehydrogenase (complex II, CII), ubiquinol-cytochrome c oxidoreductase (cytochrome b-c1 complex, complex III, CIII) and cytochrome c oxidase (complex IV, CIV), that cooperate to transfer electrons derived from NADH and succinate to molecular oxygen, creating an electrochemical gradient over the inner membrane that drives transmembrane transport and the ATP synthase. Cytochrome c oxidase is the component of the respiratory chain that catalyzes the reduction of oxygen to water. Electrons originating from reduced cytochrome c in the intermembrane space (IMS) are transferred via the dinuclear copper A center (CU(A)) of subunit 2 and heme A of subunit 1 to the active site in subunit 1, a binuclear center (BNC) formed by heme A3 and copper B (CU(B)). The BNC reduces molecular oxygen to 2 water molecules using 4 electrons from cytochrome c in the IMS and 4 protons from the mitochondrial matrix. This chain is Cytochrome c oxidase subunit 3 (MT-CO3), found in Tragelaphus strepsiceros (Greater kudu).